A 254-amino-acid chain; its full sequence is 3-deoxy-manno-octulosonate cytidylyltransferase (254 aa).

This sequence belongs to the KdsB family.

The protein localises to the cytoplasm. The catalysed reaction is 3-deoxy-alpha-D-manno-oct-2-ulosonate + CTP = CMP-3-deoxy-beta-D-manno-octulosonate + diphosphate. Its pathway is nucleotide-sugar biosynthesis; CMP-3-deoxy-D-manno-octulosonate biosynthesis; CMP-3-deoxy-D-manno-octulosonate from 3-deoxy-D-manno-octulosonate and CTP: step 1/1. The protein operates within bacterial outer membrane biogenesis; lipopolysaccharide biosynthesis. Activates KDO (a required 8-carbon sugar) for incorporation into bacterial lipopolysaccharide in Gram-negative bacteria. In Geobacter metallireducens (strain ATCC 53774 / DSM 7210 / GS-15), this protein is 3-deoxy-manno-octulosonate cytidylyltransferase.